The chain runs to 2944 residues: Collagen alpha-1(VII) chain (2944 aa).

Residues 1–16 form the signal peptide; sequence MTLRLLVAALCAGILA. Residues 17 to 1253 form a nonhelical region (NC1) region; that stretch reads EAPRVRAQHR…PEPCPVYCPK (1237 aa). The region spanning 38–211 is the VWFA 1 domain; the sequence is DIVFLLDGSS…SILRTLLPLV (174 aa). Fibronectin type-III domains follow at residues 234 to 329, 330 to 416, 417 to 507, 510 to 597, 600 to 687, 688 to 775, 778 to 866, 869 to 957, and 958 to 1051; these read APRD…TALE, GPEL…TDAS, VEQT…PELP, PVTD…EPET, AVPG…DPLG, PVRT…APEP, RVSR…PPEA, ALGT…SPRV, and PSIE…CPRG. The N-linked (GlcNAc...) asparagine glycan is linked to Asn-337. The interval 632–651 is disordered; it reads STGSGPESSQTLPPDSTATD. N-linked (GlcNAc...) asparagine glycosylation is present at Asn-786. The VWFA 2 domain maps to 1054–1229; it reads DVVFLPHATQ…PSLDQAVSGL (176 aa). Asn-1109 carries an N-linked (GlcNAc...) asparagine glycan. 2 consecutive short sequence motifs (cell attachment site) follow at residues 1170 to 1172 and 1334 to 1336; these read RGD. 3 disordered regions span residues 1239–1941, 1963–2782, and 2837–2872; these read TTQP…SVPN, WDES…EKGE, and SHAE…PWDS. The interrupted collagenous region stretch occupies residues 1254–1477; that stretch reads GQKGEPGEMG…GPRGPPGAIG (224 aa). The segment at 1254-2784 is triple-helical region; sequence GQKGEPGEMG…GPRGEKGEAA (1531 aa). Basic and acidic residues predominate over residues 1336-1346; the sequence is DPGERGPRGPK. A compositionally biased stretch (gly residues) spans 1355 to 1365; the sequence is VIGGEGPGLPG. Residues 1399-1408 show a composition bias toward basic and acidic residues; it reads KGDKGDRGER. The span at 1429–1440 shows a compositional bias: pro residues; it reads PGSPGPQGPVGP. Over residues 1574-1583 the composition is skewed to low complexity; sequence RGPPGLVLPG. Composition is skewed to basic and acidic residues over residues 1630–1642, 1669–1683, and 1715–1733; these read RGRD…KGDE, VGEK…EDGR, and AREK…RGPK. Residues 1786-1802 show a composition bias toward low complexity; it reads KPGAAGPSGPNGAAGKA. Positions 1852 to 1877 are enriched in basic and acidic residues; sequence EDGRKGEKGDSGASGREGRDGPKGER. Pro residues predominate over residues 1886–1897; sequence QGPPGLPGPVGP. Residues 1898–1911 are compositionally biased toward gly residues; that stretch reads PGQGFPGVPGGTGP. Residues 1974-1984 show a composition bias toward basic and acidic residues; it reads PERRRGPKGDS. The Cell attachment site signature appears at 2008 to 2010; sequence RGD. Pro-2036 and Pro-2039 each carry 4-hydroxyproline. Over residues 2046–2055 the composition is skewed to gly residues; it reads GRAGGVGEAG. Positions 2056–2074 are enriched in basic and acidic residues; that stretch reads RPGERGERGEKGERGEQGR. The span at 2078–2092 shows a compositional bias: pro residues; the sequence is PGLPGTPGPPGPPGP. Residues Pro-2084, Pro-2087, and Pro-2090 each carry the 4-hydroxyproline modification. Residues 2127-2143 show a composition bias toward basic and acidic residues; the sequence is PKGDRGVPGIKGDRGEP. 4-hydroxyproline occurs at positions 2167, 2176, 2185, and 2188. Composition is skewed to low complexity over residues 2191 to 2206 and 2235 to 2250; these read PGLA…SGLK and SGLV…PGQV. Residues 2328–2346 are compositionally biased toward basic and acidic residues; that stretch reads AKGDRGLPGPRGEKGEAGR. Over residues 2387–2406 the composition is skewed to low complexity; sequence VKGDLGLPGLPGAPGVVGFP. Positions 2438–2448 are enriched in pro residues; sequence PLGPPGPPGSV. 2 stretches are compositionally biased toward basic and acidic residues: residues 2471 to 2486 and 2534 to 2570; these read RGER…DGRP and AKGD…EPGD. The Cell attachment site signature appears at 2553 to 2555; that stretch reads RGD. The span at 2573 to 2601 shows a compositional bias: low complexity; it reads SAGLPGLRGLLGPQGQPGAAGIPGDPGSP. 5-hydroxylysine; alternate occurs at positions 2625 and 2631. O-linked (Gal...) hydroxylysine; alternate glycans are attached at residues Lys-2625 and Lys-2631. A 4-hydroxyproline mark is found at Pro-2664, Pro-2667, and Pro-2673. Gly residues predominate over residues 2704 to 2713; that stretch reads GTPGIGGFPG. The span at 2749 to 2762 shows a compositional bias: low complexity; that stretch reads GERVVGAPGVPGAP. The interval 2785-2944 is nonhelical region (NC2); that stretch reads LTEDDIRGFV…QSQGTGTAQD (160 aa). Positions 2837 to 2847 are enriched in basic and acidic residues; that stretch reads SHAEEEERVPP. The span at 2848–2872 shows a compositional bias: acidic residues; that stretch reads EDDEYSEYSEYSVEEYQDPEAPWDS. The region spanning 2872–2944 is the BPTI/Kunitz inhibitor domain; that stretch reads SDDPCSLPLD…QSQGTGTAQD (73 aa). 3 disulfides stabilise this stretch: Cys-2876-Cys-2929, Cys-2885-Cys-2912, and Cys-2904-Cys-2925.

In terms of assembly, homotrimer. Interacts with MIA3/TANGO1; facilitating its loading into transport carriers and subsequent secretion. In terms of processing, prolines at the third position of the tripeptide repeating unit (G-X-Y) are hydroxylated in some or all of the chains.

Its subcellular location is the secreted. It localises to the extracellular space. The protein resides in the extracellular matrix. It is found in the basement membrane. Its function is as follows. Stratified squamous epithelial basement membrane protein that forms anchoring fibrils which may contribute to epithelial basement membrane organization and adherence by interacting with extracellular matrix (ECM) proteins such as type IV collagen. In Homo sapiens (Human), this protein is Collagen alpha-1(VII) chain (COL7A1).